We begin with the raw amino-acid sequence, 205 residues long: Recombination protein RecR (205 aa).

Residues 64–79 (CRRCFNITVDELCPIC) form a C4-type zinc finger. In terms of domain architecture, Toprim spans 87 to 182 (TKICVVEEPL…RVTRPARGLP (96 aa)).

It belongs to the RecR family.

Its function is as follows. May play a role in DNA repair. It seems to be involved in an RecBC-independent recombinational process of DNA repair. It may act with RecF and RecO. The chain is Recombination protein RecR from Chloroflexus aggregans (strain MD-66 / DSM 9485).